The following is a 163-amino-acid chain: Ubiquitin-like protein 1-ribosomal protein eS31 fusion protein (163 aa).

Positions 1 to 70 constitute a Ubiquitin-like domain; that stretch reads MVFVKTLNRT…IYVNLELLGG (70 aa). G70 is covalently cross-linked (Glycyl lysine isopeptide (Gly-Lys) (interchain with K-? in acceptor proteins)). A C4-type zinc finger spans residues 115 to 138; the sequence is CQQPSCGGGVFMAQHANRHYCGRC.

In the N-terminal section; belongs to the ubiquitin family. The protein in the C-terminal section; belongs to the eukaryotic ribosomal protein eS31 family.

In Caenorhabditis briggsae, this protein is Ubiquitin-like protein 1-ribosomal protein eS31 fusion protein (ubl-1).